We begin with the raw amino-acid sequence, 349 residues long: ATPase GET3 (349 aa).

Residue 26 to 33 coordinates ATP; it reads KGGVGKTT. The active site involves aspartate 57. ATP is bound by residues glutamate 243 and asparagine 270. The Zn(2+) site is built by cysteine 280 and cysteine 283.

This sequence belongs to the arsA ATPase family. As to quaternary structure, homodimer. Component of the Golgi to ER traffic (GET) complex, which is composed of GET1, GET2 and GET3. Within the complex, GET1 and GET2 form a heterotetramer which is stabilized by phosphatidylinositol binding and which binds to the GET3 homodimer. Interacts with the chloride channel protein GEF1.

Its subcellular location is the cytoplasm. The protein localises to the endoplasmic reticulum. The protein resides in the golgi apparatus. In terms of biological role, ATPase required for the post-translational delivery of tail-anchored (TA) proteins to the endoplasmic reticulum. Recognizes and selectively binds the transmembrane domain of TA proteins in the cytosol. This complex then targets to the endoplasmic reticulum by membrane-bound receptors GET1 and GET2, where the tail-anchored protein is released for insertion. This process is regulated by ATP binding and hydrolysis. ATP binding drives the homodimer towards the closed dimer state, facilitating recognition of newly synthesized TA membrane proteins. ATP hydrolysis is required for insertion. Subsequently, the homodimer reverts towards the open dimer state, lowering its affinity for the GET1-GET2 receptor, and returning it to the cytosol to initiate a new round of targeting. Cooperates with the HDEL receptor ERD2 to mediate the ATP-dependent retrieval of resident ER proteins that contain a C-terminal H-D-E-L retention signal from the Golgi to the ER. Involved in low-level resistance to the oxyanions arsenite and arsenate, and in heat tolerance. This is ATPase GET3 from Clavispora lusitaniae (strain ATCC 42720) (Yeast).